A 409-amino-acid chain; its full sequence is NADH-quinone oxidoreductase subunit D (409 aa).

This sequence belongs to the complex I 49 kDa subunit family. NDH-1 is composed of 14 different subunits. Subunits NuoB, C, D, E, F, and G constitute the peripheral sector of the complex.

It is found in the cell inner membrane. It carries out the reaction a quinone + NADH + 5 H(+)(in) = a quinol + NAD(+) + 4 H(+)(out). Functionally, NDH-1 shuttles electrons from NADH, via FMN and iron-sulfur (Fe-S) centers, to quinones in the respiratory chain. The immediate electron acceptor for the enzyme in this species is believed to be ubiquinone. Couples the redox reaction to proton translocation (for every two electrons transferred, four hydrogen ions are translocated across the cytoplasmic membrane), and thus conserves the redox energy in a proton gradient. The polypeptide is NADH-quinone oxidoreductase subunit D (Sulfurovum sp. (strain NBC37-1)).